Reading from the N-terminus, the 1132-residue chain is MGANASNYPHSCSPRVGGNSQAQQTFIGTSSYSQQGYGCESKLYSLDHGHEKPQDKKKRTSGLATLKKKFIKRRKSNRSADHAKQMRELLSGWDVRDVNALVEEYEGTSALKELSLQASLARPEARTLQKDMADLYEYKYCTDVDLIFQETCFPVHRAILAARCPFFKTLLSSSPEYGAEIIMDINTAGIDMPMFSALLHYLYTGEFGMEDSRFQNVDILVQLSEEFGTPNSLDVDMRGLFDYMCYYDVVLSFSSDSELVEAFGGNQNCLDEELKAHKAVISARSPFFRNLLQRRIRTGEEITDRTLRTPTRIILDESIIPKKYATVILHCMYTDVVDLSVLHCSPSVGSLSEVQALVAGKPNMTRAEEAMELYHIALFLEFNMLAQGCEDIIAESISLDTLIAILKWSSHPYGSKWVHRQALHFLCEEFSQVMTSDVFYELSKDHLLTAIQSDYLQASEQDILKYLIKWGEHQLMKRIADREPNLLSGTAHSVNKRGVKRRDLDMEELREILSSLLPFVRIEHILPINSEVLSDAMKRGLISTPPSDMLPTTEGGKSNAWLRQKNAGIYVRPRLFSPYVEEAKSVLDEMMVEQTDLVRLRMVRMSNVPDTLYMVNNAVPQCCHMISHQQISSNQSSPPSVVANEIPVPRLLIMKDMVRRLQELRHTEQVQRAYALNCGEGATVSYEIQIRVLREFGLADAAAELLQNPHKFFPDERFGDESPLLTMRQPGRCRVNSTPPAETMFTDLDSFVAFHPPLPPPPPPYHPPATPIHNQLKAGWKQRPPSQHPSRSFSYPCNHSLFHSRTAPKAGPPPVYLPSVKAAPPDCTSTAGLGRQTVAAAAATTTSTATAAAAAASEKQVRTQPVLNDLMPDIAVGVSTLSLKDRRLPELAVDTELSQSVSEAGPGPPQHLSCIPQRHTHTSRKKHTLEQKTDTRENPQEYPDFYDFSNAACRPSTPALSRRTPSPSQGGYFGPDLYSHNKASPSGLKSAYLPGQTSPKKQEEARREYPLSPDGHLHRQKNEPIHLDVVEQPPQRSDFPLAAPENASTGPAHVRGRTAVETDLTFGLTPNRPSLSACSSEAPEERSGRRLADSESLGHGAQRNTDLEREDSISRGRRSPSKPDFLYKKSAL.

Residues 1 to 10 (MGANASNYPH) are compositionally biased toward polar residues. The tract at residues 1–24 (MGANASNYPHSCSPRVGGNSQAQQ) is disordered. G2 is lipidated: N-myristoyl glycine. BTB domains lie at 142–211 (TDVD…GMED) and 247–341 (YDVV…DLSV). The BACK domain maps to 413–479 (YGSKWVHRQA…WGEHQLMKRI (67 aa)). S722 is modified (phosphoserine). Disordered stretches follow at residues 897-1019 (LSQS…HLHR) and 1035-1132 (QRSD…KSAL). The span at 918 to 927 (RHTHTSRKKH) shows a compositional bias: basic residues. Composition is skewed to basic and acidic residues over residues 928-939 (TLEQKTDTRENP), 1000-1019 (KKQEEARREYPLSPDGHLHR), 1083-1093 (PEERSGRRLAD), and 1105-1114 (TDLEREDSIS). S1012 bears the Phosphoserine mark.

The protein resides in the nucleus. Its function is as follows. Acts as a mediator of epithelial dynamics and organ branching by promoting cleft progression. Induced following accumulation of fibronectin in forming clefts, leading to local expression of the cell-scattering SNAIL2 and suppression of E-cadherin levels, thereby altering cell morphology and reducing cell-cell adhesion. This stimulates cell separation at the base of forming clefts by local, dynamic intercellular gap formation and promotes cleft progression. The sequence is that of BTB/POZ domain-containing protein 7 (BTBD7) from Homo sapiens (Human).